The sequence spans 670 residues: Methionine--tRNA ligase (670 aa).

Positions 14-24 match the 'HIGH' region motif; it reads PYANGHLHLGH. 4 residues coordinate Zn(2+): C145, C148, C158, and C161. Positions 330 to 334 match the 'KMSKS' region motif; sequence KMSKS. Position 333 (K333) interacts with ATP. The tRNA-binding domain occupies 570–670; it reads DFAKVDLRIA…AGALPGMKVK (101 aa).

Belongs to the class-I aminoacyl-tRNA synthetase family. MetG type 1 subfamily. As to quaternary structure, homodimer. It depends on Zn(2+) as a cofactor.

The protein resides in the cytoplasm. It catalyses the reaction tRNA(Met) + L-methionine + ATP = L-methionyl-tRNA(Met) + AMP + diphosphate. In terms of biological role, is required not only for elongation of protein synthesis but also for the initiation of all mRNA translation through initiator tRNA(fMet) aminoacylation. In Legionella pneumophila subsp. pneumophila (strain Philadelphia 1 / ATCC 33152 / DSM 7513), this protein is Methionine--tRNA ligase.